Consider the following 337-residue polypeptide: Casein kinase I isoform alpha (337 aa).

The region spanning 20–288 (YRVIRKIGSG…YLRQLFRILF (269 aa)) is the Protein kinase domain. ATP is bound by residues 26-34 (IGSGSFGDI) and K49. The active-site Proton acceptor is the D139.

This sequence belongs to the protein kinase superfamily. CK1 Ser/Thr protein kinase family. Casein kinase I subfamily. As to quaternary structure, interacts with cos. Requires Mg(2+) as cofactor. In terms of processing, phosphorylated. The dephosphorylated kinase is active in the cytoplasm while the active kinase in the nucleus is phosphorylated.

The protein localises to the cytoplasm. The protein resides in the nucleus. It catalyses the reaction L-seryl-[protein] + ATP = O-phospho-L-seryl-[protein] + ADP + H(+). The enzyme catalyses L-threonyl-[protein] + ATP = O-phospho-L-threonyl-[protein] + ADP + H(+). Its activity is regulated as follows. Activity increases following DNA damage. Functionally, casein kinases are operationally defined by their preferential utilization of acidic proteins such as caseins as substrates. Can phosphorylate a large number of proteins. Negative regulator of wg signaling. Phosphorylates arm directly or indirectly and stimulates its degradation which prevents inappropriate wg signaling. Phosphorylates smo which promotes its accumulation at the cell surface and its signaling activity in response to hh. Together with dco, regulates proteolytic processing of ci by phosphorylating it, which promotes its binding to slmb, the F-box recognition component of the SCF(slmb) E3 ubiquitin-protein ligase required for ci processing. Inhibits condensin II interphase activity by promoting degradation of the Cap-H2 regulatory subunit and limiting the levels of chromatin-bound Cap-H2 which regulates interphase chromosome organization. The polypeptide is Casein kinase I isoform alpha (CkIalpha) (Drosophila melanogaster (Fruit fly)).